A 159-amino-acid chain; its full sequence is Ribosomal RNA large subunit methyltransferase H (159 aa).

Residues leucine 76, glycine 108, and 127–132 (FSKMTF) each bind S-adenosyl-L-methionine.

The protein belongs to the RNA methyltransferase RlmH family. Homodimer.

It is found in the cytoplasm. It catalyses the reaction pseudouridine(1915) in 23S rRNA + S-adenosyl-L-methionine = N(3)-methylpseudouridine(1915) in 23S rRNA + S-adenosyl-L-homocysteine + H(+). Functionally, specifically methylates the pseudouridine at position 1915 (m3Psi1915) in 23S rRNA. The polypeptide is Ribosomal RNA large subunit methyltransferase H (Bifidobacterium longum (strain DJO10A)).